The primary structure comprises 193 residues: Ion-translocating oxidoreductase complex subunit A (193 aa).

The next 6 helical transmembrane spans lie at 5–25, 39–59, 63–83, 102–122, 134–154, and 171–191; these read LLLFVGTVLVNNFVLVKFLGL, MGMGLATTFVMTLTSICAWLI, ILIPLNLIYLRTLAFILVIAV, LLGIFLPLITTNCAVLGVALL, ALYGFSAAVGFSLVMVLFAAI, and AIALITAGLMSLAFMGFSGLV.

Belongs to the NqrDE/RnfAE family. The complex is composed of six subunits: RsxA, RsxB, RsxC, RsxD, RsxE and RsxG.

It localises to the cell inner membrane. In terms of biological role, part of a membrane-bound complex that couples electron transfer with translocation of ions across the membrane. Required to maintain the reduced state of SoxR. The sequence is that of Ion-translocating oxidoreductase complex subunit A from Shigella flexneri serotype 5b (strain 8401).